The primary structure comprises 402 residues: Baeyer-Villiger oxidase notM (402 aa).

The protein belongs to the questin oxidase family.

Baeyer-Villiger oxidase; part of the gene cluster that mediates the biosynthesis of notoamide, a fungal indole alkaloid that belongs to a family of natural products containing a characteristic bicyclo[2.2.2]diazaoctane core. The first step of notoamide biosynthesis involves coupling of L-proline and L-tryptophan by the bimodular NRPS notE, to produce cyclo-L-tryptophan-L-proline called brevianamide F. The reverse prenyltransferase notF then acts as a deoxybrevianamide E synthase and converts brevianamide F to deoxybrevianamide E via reverse prenylation at C-2 of the indole ring leading to the bicyclo[2.2.2]diazaoctane core. Deoxybrevianamide E is further hydroxylated at C-6 of the indole ring, likely catalyzed by the cytochrome P450 monooxygenase notG, to yield 6-hydroxy-deoxybrevianamide E. 6-hydroxy-deoxybrevianamide E is a specific substrate of the prenyltransferase notC for normal prenylation at C-7 to produce 6-hydroxy-7-prenyl-deoxybrevianamide, also called notoamide S. As the proposed pivotal branching point in notoamide biosynthesis, notoamide S can be diverted to notoamide E through an oxidative pyran ring closure putatively catalyzed by either notH cytochrome P450 monooxygenase or the notD FAD-linked oxidoreductase. This step would be followed by an indole 2,3-epoxidation-initiated pinacol-like rearrangement catalyzed by the notB FAD-dependent monooxygenase leading to the formation of notoamide C and notoamide D. On the other hand notoamide S is converted to notoamide T by notH (or notD), a bifunctional oxidase that also functions as the intramolecular Diels-Alderase responsible for generation of (+)-notoamide T. To generate antipodal (-)-notoaminide T, notH' (or notD') in Aspergillus versicolor is expected to catalyze a Diels-Alder reaction leading to the opposite stereochemistry. The remaining oxidoreductase notD (or notH) likely catalyzes the oxidative pyran ring formation to yield (+)-stephacidin A. The FAD-dependent monooxygenase notI is highly similar to notB and is predicted to catalyze a similar conversion from (+)-stephacidin A to (-)-notoamide B via the 2,3-epoxidation of (+)-stephacidin A followed by a pinacol-type rearrangement. Finally, it remains unclear which enzyme could be responsible for the final hydroxylation steps leading to notoamide A and sclerotiamide. The function of notM in the notoamide biosynthesis has not been determined yet. This chain is Baeyer-Villiger oxidase notM, found in Aspergillus sp. (strain MF297-2).